The following is a 331-amino-acid chain: 3-dehydrosphinganine reductase TSC10B (331 aa).

Topologically, residues 1-7 (MAAIFSL) are lumenal. A helical transmembrane segment spans residues 8–28 (FLFFILFIVSLLIILSFIVRP). Residues 29 to 262 (RSVTIPIKFR…ICFDGIKAGK (234 aa)) lie on the Cytoplasmic side of the membrane. Glycine 44, serine 46, serine 47, glycine 48, arginine 69, lysine 73, and aspartate 95 together coordinate NADPH. Residues 44 to 48 (GGSSG) carry the GXSXG motif. Serine 172 acts as the Proton donor in catalysis. Tyrosine 186 acts as the Proton acceptor in catalysis. 2 residues coordinate NADP(+): tyrosine 186 and lysine 190. Catalysis depends on lysine 190, which acts as the Lowers pKa of active site Tyr. The helical transmembrane segment at 263 to 283 (FTVTCHFIGFLLSIASTGMSP) threads the bilayer. The Lumenal segment spans residues 284 to 286 (QGS). The chain crosses the membrane as a helical span at residues 287–307 (FWLALTEVMFGGLIRLASLVF). Residues 308–331 (QWQWYKTIEKWSQRNKKEVNSKLA) are Cytoplasmic-facing.

Belongs to the short-chain dehydrogenases/reductases (SDR) family. In terms of tissue distribution, expressed in roots, leaves, stems and flowers.

The protein localises to the endoplasmic reticulum membrane. It catalyses the reaction sphinganine + NADP(+) = 3-oxosphinganine + NADPH + H(+). Its pathway is lipid metabolism; sphingolipid metabolism. In terms of biological role, catalyzes the reduction of 3'-oxosphinganine (3-ketodihydrosphingosine/KDS) to sphinganine (dihydrosphingosine/DHS), the second step of de novo sphingolipid biosynthesis. In plants, sphingolipids seems to play a critical role in mineral ion homeostasis, most likely through their involvement in the ion transport functionalities of membrane systems in the root. Is stereospecific for D-erythro-DHS production and does not produce L-threo-DHS. This Arabidopsis thaliana (Mouse-ear cress) protein is 3-dehydrosphinganine reductase TSC10B (TSC10B).